The chain runs to 121 residues: Small ribosomal subunit protein uS13 (121 aa).

Residues 94-121 form a disordered region; that stretch reads GLPVRGQNTKNNARTRKGKAVAIAGKKK. Over residues 106 to 121 the composition is skewed to basic residues; that stretch reads ARTRKGKAVAIAGKKK.

This sequence belongs to the universal ribosomal protein uS13 family. As to quaternary structure, part of the 30S ribosomal subunit. Forms a loose heterodimer with protein S19. Forms two bridges to the 50S subunit in the 70S ribosome.

Located at the top of the head of the 30S subunit, it contacts several helices of the 16S rRNA. In the 70S ribosome it contacts the 23S rRNA (bridge B1a) and protein L5 of the 50S subunit (bridge B1b), connecting the 2 subunits; these bridges are implicated in subunit movement. Contacts the tRNAs in the A and P-sites. The sequence is that of Small ribosomal subunit protein uS13 from Streptococcus sanguinis (strain SK36).